Consider the following 396-residue polypeptide: 1-deoxy-D-xylulose 5-phosphate reductoisomerase (396 aa).

6 residues coordinate NADPH: T15, G16, S17, I18, G41, and N130. Position 131 (K131) interacts with 1-deoxy-D-xylulose 5-phosphate. Residue E132 coordinates NADPH. D155 serves as a coordination point for Mn(2+). S156, E157, S181, and H204 together coordinate 1-deoxy-D-xylulose 5-phosphate. E157 serves as a coordination point for Mn(2+). G210 serves as a coordination point for NADPH. The 1-deoxy-D-xylulose 5-phosphate site is built by S217, N222, K223, and E226. A Mn(2+)-binding site is contributed by E226.

It belongs to the DXR family. Mg(2+) serves as cofactor. It depends on Mn(2+) as a cofactor.

It catalyses the reaction 2-C-methyl-D-erythritol 4-phosphate + NADP(+) = 1-deoxy-D-xylulose 5-phosphate + NADPH + H(+). It functions in the pathway isoprenoid biosynthesis; isopentenyl diphosphate biosynthesis via DXP pathway; isopentenyl diphosphate from 1-deoxy-D-xylulose 5-phosphate: step 1/6. Functionally, catalyzes the NADPH-dependent rearrangement and reduction of 1-deoxy-D-xylulose-5-phosphate (DXP) to 2-C-methyl-D-erythritol 4-phosphate (MEP). This Bifidobacterium longum subsp. infantis (strain ATCC 15697 / DSM 20088 / JCM 1222 / NCTC 11817 / S12) protein is 1-deoxy-D-xylulose 5-phosphate reductoisomerase.